Here is a 289-residue protein sequence, read N- to C-terminus: Serine/threonine-protein phosphatase Pgam5, mitochondrial (289 aa).

It belongs to the phosphoglycerate mutase family. BPG-dependent PGAM subfamily. In terms of assembly, interacts with Pk92B/ASK1.

It localises to the mitochondrion outer membrane. The enzyme catalyses O-phospho-L-seryl-[protein] + H2O = L-seryl-[protein] + phosphate. It catalyses the reaction O-phospho-L-threonyl-[protein] + H2O = L-threonyl-[protein] + phosphate. Functionally, displays phosphatase activity for serine/threonine residues, and dephosphorylates and activates Pk92B kinase. Has apparently no phosphoglycerate mutase activity. The sequence is that of Serine/threonine-protein phosphatase Pgam5, mitochondrial from Drosophila grimshawi (Hawaiian fruit fly).